Reading from the N-terminus, the 385-residue chain is Cell division protein FtsZ (385 aa).

Residues 37-41 (GGGSN), 125-127 (GTG), glutamate 156, lysine 160, and aspartate 204 contribute to the GTP site.

The protein belongs to the FtsZ family. In terms of assembly, homodimer. Polymerizes to form a dynamic ring structure in a strictly GTP-dependent manner. Interacts directly with several other division proteins.

The protein resides in the cytoplasm. In terms of biological role, essential cell division protein that forms a contractile ring structure (Z ring) at the future cell division site. The regulation of the ring assembly controls the timing and the location of cell division. One of the functions of the FtsZ ring is to recruit other cell division proteins to the septum to produce a new cell wall between the dividing cells. Binds GTP and shows GTPase activity. The protein is Cell division protein FtsZ of Helicobacter pylori (strain ATCC 700392 / 26695) (Campylobacter pylori).